A 341-amino-acid polypeptide reads, in one-letter code: Mitochondrial ubiquitin ligase activator of nfkb 1-A (341 aa).

The Cytoplasmic portion of the chain corresponds to 1–5 (MEDFP). Residues 6–26 (VLEMVCLGSSVALSGLFYYIY) form a helical membrane-spanning segment. Over 27–233 (RKKRKTVDKL…LLMEQEGQAE (207 aa)) the chain is Mitochondrial intermembrane. A helical membrane pass occupies residues 234-254 (VWRVFACICALAGVAVLIWTG). Topologically, residues 255-341 (RRYYRQLKLR…IKRVVPLYQA (87 aa)) are cytoplasmic. The RING-type zinc-finger motif lies at 292 to 329 (CVICLSNPRGCVLLDCGHVCCCFRCYQALPQPFCPICR).

Homooligomer.

It is found in the mitochondrion outer membrane. It catalyses the reaction S-ubiquitinyl-[E2 ubiquitin-conjugating enzyme]-L-cysteine + [acceptor protein]-L-lysine = [E2 ubiquitin-conjugating enzyme]-L-cysteine + N(6)-ubiquitinyl-[acceptor protein]-L-lysine.. It participates in protein modification; protein ubiquitination. Functionally, E3 ubiquitin-protein ligase that plays a role in the control of mitochondrial morphology. Promotes mitochondrial fragmentation and influences mitochondrial localization. Inhibits cell growth. E3 ubiquitin ligases accept ubiquitin from an E2 ubiquitin-conjugating enzyme in the form of a thioester and then directly transfer the ubiquitin to targeted substrates. This is Mitochondrial ubiquitin ligase activator of nfkb 1-A (mul1a) from Danio rerio (Zebrafish).